A 223-amino-acid polypeptide reads, in one-letter code: Deoxyribose-phosphate aldolase (223 aa).

Asp89 serves as the catalytic Proton donor/acceptor. The Schiff-base intermediate with acetaldehyde role is filled by Lys152. The active-site Proton donor/acceptor is Lys181.

This sequence belongs to the DeoC/FbaB aldolase family. DeoC type 1 subfamily.

It localises to the cytoplasm. The catalysed reaction is 2-deoxy-D-ribose 5-phosphate = D-glyceraldehyde 3-phosphate + acetaldehyde. It participates in carbohydrate degradation; 2-deoxy-D-ribose 1-phosphate degradation; D-glyceraldehyde 3-phosphate and acetaldehyde from 2-deoxy-alpha-D-ribose 1-phosphate: step 2/2. Its function is as follows. Catalyzes a reversible aldol reaction between acetaldehyde and D-glyceraldehyde 3-phosphate to generate 2-deoxy-D-ribose 5-phosphate. In Bacillus cereus (strain Q1), this protein is Deoxyribose-phosphate aldolase.